Here is a 295-residue protein sequence, read N- to C-terminus: 33 kDa chaperonin (295 aa).

Cystine bridges form between C236–C238 and C269–C272.

This sequence belongs to the HSP33 family. In terms of processing, under oxidizing conditions two disulfide bonds are formed involving the reactive cysteines. Under reducing conditions zinc is bound to the reactive cysteines and the protein is inactive.

The protein resides in the cytoplasm. In terms of biological role, redox regulated molecular chaperone. Protects both thermally unfolding and oxidatively damaged proteins from irreversible aggregation. Plays an important role in the bacterial defense system toward oxidative stress. This is 33 kDa chaperonin from Geobacter sp. (strain M21).